The chain runs to 224 residues: Inhibitor of apoptosis protein (224 aa).

The BIR repeat unit spans residues Val-29–Met-92. The Zn(2+) site is built by Cys-62, Cys-65, His-82, and Cys-89. The C4-type zinc-finger motif lies at Cys-189 to Cys-207.

This sequence belongs to the asfivirus IAP family. In terms of assembly, interacts with subunit p17 of host CASP3.

Its subcellular location is the host cytoplasm. It localises to the virion. Functionally, prevents apoptosis of host cell by inhibiting caspase-3/CASP3 activation to promote the viral replication. Also induces the activation of host NF-kappaB. The sequence is that of Inhibitor of apoptosis protein from Ornithodoros (relapsing fever ticks).